The primary structure comprises 555 residues: Protein tyrosine phosphatase-like protein egg-3 (555 aa).

2 consecutive short sequence motifs (D-box) follow at residues 96 to 99 and 130 to 133; these read RILL and RDRL. Residues 207–514 form the Tyrosine-protein phosphatase domain; sequence FVQEFNRLDR…LFIYRVILRW (308 aa). An RXXL motif; required for cortical localization motif is present at residues 253 to 256; that stretch reads RVKL. The RXXL motif signature appears at 266–269; sequence RNEL. Short sequence motifs (RXXL motif; required for cortical localization) lie at residues 509-512 and 525-528; these read RVIL and RAAL.

Belongs to the protein-tyrosine phosphatase family. In terms of assembly, part of a complex, consisting of pseudophosphatases egg-3, egg-4, egg-5 and kinase mbk-2; this complex is required for the oocyte-to-zygote transition. Interacts (via tyrosine-protein phosphatase domain) with kinase mbk-2 (via N-terminus); the interaction does not affect mbk-2 kinase activity, is enhanced by mbk-2 tyrosine phosphorylation status and requires prior binding of mbk-2 to egg-4 and egg-5. Interacts with egg-4.

The protein localises to the cytoplasm. The protein resides in the cell cortex. Its function is as follows. Probable pseudophosphatase required for the oocyte-to-zygote transition during which it regulates the polarized dispersal of the cortical actin cytoskeleton, the synthesis of the eggshell chitin layer and the formation of the polar bodies after meiosis I and II. Acts as a scaffold to tether kinase mbk-2 and pseudophosphatases egg-4 and egg-5 to the oocyte cortex and thus restricts mbk-2 activity to the cortex during meiosis I. Regulates mbk-2 localization to cytoplasmic foci during meiosis II. Also required for chitin synthase chs-1 localization to the cell cortex of unfertilized oocytes and to cytoplasmic foci in the fertilized embryo. The protein is Protein tyrosine phosphatase-like protein egg-3 of Caenorhabditis elegans.